The following is a 684-amino-acid chain: MSKIPGSNLEFVREEDFVEYYIFPKIPDNVQDEGALRKLMLQIRNEISAIVREKSLERSYLWHKDEFQLQVRLGGAEERLLNEETNPEEEAELGDLPPHFHGVTHYGDNISDEWFVVYLLTEITRARGDCIARVSDSDGEFLLIEAADALPDWASPETCEQRVYLVGGHLQLLQNSAASSQDKPLTMAMAVQRIRMNPTLYRCSQEIQSCIDARLKEYQIAQPHFSIHRQVLELPHSAAQLLKQKPRLLSSAVRAFCERDSLDIKALRTMRYFPPEATRVRTNVRFTRCLYAMLSHQQYLPEKRLGWHLTDPVSEPERYKEQLLGLKLASGLEILATQAKRVEGQQLEDLPAWRSYLRSLLSKGYFRDNIEGSAEYQELLNKAKVYFRGNQERFRTASRAGAEILDLLLHPAEAASEELRDEENNLQPSDSDEWLNISAEDLDSMLQDRYGPKKLYKPNGQMNAEEFTKQLAEFLDRQSNYEGIEHRGLEEPELDSDDDEPPPQANGSTGLTAKVKKNPSMRKACQRNSVIQPEEPDSTHVRNFLDFVIPEDNWDSTSEMSDYADEDDMESNLNALSGGGSVFPLDRQIQSYMEQMDRELAQTSVGKSFHGKKKTAPQADEDDFDDIEDFEPININVNTLRNMMDSYQSQVGGAGPVSNLFSAMGVGMSAVEDKEQKDISESAV.

Acidic residues predominate over residues 491-501 (EPELDSDDDEP). Disordered regions lie at residues 491–528 (EPEL…CQRN) and 603–624 (TSVG…EDDF).

It belongs to the ECD family. As to expression, expressed in the ecdysone-producing larval ring gland, nervous system, imaginal disks and gonads.

It is found in the cytoplasm. Its function is as follows. Required in both the follicle cells and the germline for oocyte development. The polypeptide is Protein ecdysoneless (Drosophila melanogaster (Fruit fly)).